The primary structure comprises 348 residues: Rhodopsin (348 aa).

Residues 1 to 33 (TEGPYFYVPMVNTTGIVRSPYEYPQYYLVNPAA) are Extracellular-facing. Asparagine 12 is a glycosylation site (N-linked (GlcNAc...) asparagine). The helical transmembrane segment at 34–58 (FAILGAYMFFLIIVGFPVNFMTLYV) threads the bilayer. The Cytoplasmic portion of the chain corresponds to 59–70 (TLEHKKLRTPLN). Residues 71–93 (YILLNLAVADLFMVIGGFTTTMY) form a helical membrane-spanning segment. The Extracellular portion of the chain corresponds to 94 to 107 (TSMHGYFVLGRLGC). Cysteine 107 and cysteine 184 are disulfide-bonded. The chain crosses the membrane as a helical span at residues 108–130 (NLEGFFATLGGMISLWSLAVLAI). The 'Ionic lock' involved in activated form stabilization signature appears at 131–133 (ERW). The Cytoplasmic segment spans residues 131-149 (ERWVVVCKPISNFRFGENH). Residues 150–170 (AIMGVSLTWGMALACTVPPLV) traverse the membrane as a helical segment. At 171–199 (GWSRYIPEGMQCSCGIDYYTRAEGFNNET) the chain is on the extracellular side. N-linked (GlcNAc...) asparagine glycosylation is present at asparagine 197. The chain crosses the membrane as a helical span at residues 200 to 221 (FVLYMFCCHFTVPLTIIFFCYG). The Cytoplasmic segment spans residues 222–249 (RLLCAVKEAAAAQQESETTQRAEREVTR). The chain crosses the membrane as a helical span at residues 250–271 (MVVIMVIGFLVCWLPYASVAWF). The Extracellular segment spans residues 272–283 (VFTHQGSEFGPL). The chain crosses the membrane as a helical span at residues 284–305 (FMTIPAFFAKSSAIYNPMIYIC). At lysine 293 the chain carries N6-(retinylidene)lysine. Topologically, residues 306–348 (MNKQFRHCMITTLFCGKNPFEGEEEGASSTKTEASSASSVSPA) are cytoplasmic. Residue cysteine 320 is the site of S-palmitoyl cysteine attachment. Residues 327–348 (GEEEGASSTKTEASSASSVSPA) form a disordered region. Over residues 332–348 (ASSTKTEASSASSVSPA) the composition is skewed to low complexity.

It belongs to the G-protein coupled receptor 1 family. Opsin subfamily. Phosphorylated on some or all of the serine and threonine residues present in the C-terminal region. In terms of processing, contains one covalently linked retinal chromophore.

Its subcellular location is the membrane. The protein localises to the cell projection. The protein resides in the cilium. It localises to the photoreceptor outer segment. In terms of biological role, photoreceptor required for image-forming vision at low light intensity. While most salt water fish species use retinal as chromophore, most freshwater fish use 3-dehydroretinal, or a mixture of retinal and 3-dehydroretinal. Light-induced isomerization of 11-cis to all-trans retinal triggers a conformational change that activates signaling via G-proteins. Subsequent receptor phosphorylation mediates displacement of the bound G-protein alpha subunit by arrestin and terminates signaling. This is Rhodopsin (rho) from Sargocentron xantherythrum (Hawaiian squirrelfish).